Here is a 270-residue protein sequence, read N- to C-terminus: Nodule lectin (270 aa).

The N-terminal stretch at 1–33 (MAFYRTNLPTRELFSLVSVVIVLLATNINSVQA) is a signal peptide. Residues 34 to 41 (LSFNFTKL) constitute a propeptide that is removed on maturation. N-linked (GlcNAc...) asparagine glycosylation is present at Asn134.

It belongs to the leguminous lectin family. Glycosylated in a boron-dependent manner. Glycosylation is required for localization to symbiosomes. 3 different glycosylation variants, NLEC-1A, NLEC-1B and NLEC-1C, have been identified. Expressed in nodules of Rhizobium-infected and uninfected roots and in the root stele near the nodule attachment point. In roots which have been colonized by the endomycorrhizal fungus G.versiforme, detected only in cortical cells colonized by the fungus, mainly those containing arbuscules.

It localises to the symbiosome. Its subcellular location is the peribacteroid space. The protein localises to the peribacteroid membrane. Functionally, involved in symbiosome development. The chain is Nodule lectin (NLEC1) from Pisum sativum (Garden pea).